Reading from the N-terminus, the 139-residue chain is Transcription antitermination protein NusB (139 aa).

Belongs to the NusB family.

Functionally, involved in transcription antitermination. Required for transcription of ribosomal RNA (rRNA) genes. Binds specifically to the boxA antiterminator sequence of the ribosomal RNA (rrn) operons. This Enterobacter sp. (strain 638) protein is Transcription antitermination protein NusB.